A 73-amino-acid polypeptide reads, in one-letter code: uncharacterized protein (73 aa).

This is an uncharacterized protein from Sus scrofa (Pig).